The following is a 332-amino-acid chain: Ethylene-responsive transcription factor ERF119 (332 aa).

Positions 1 to 33 are disordered; that stretch reads MAERKKRSSIQTNKPNKKPMKKKPFQLNHLPGL. Residues 15–24 show a composition bias toward basic residues; that stretch reads PNKKPMKKKP. Positions 130–187 form a DNA-binding region, AP2/ERF; it reads KPVGVRQRKWGKWAAEIRHPITKVRTWLGTYETLEQAADAYATKKLEFDALAAATSAA.

Belongs to the AP2/ERF transcription factor family. ERF subfamily.

The protein localises to the nucleus. In terms of biological role, probably acts as a transcriptional activator. Binds to the GCC-box pathogenesis-related promoter element. May be involved in the regulation of gene expression by stress factors and by components of stress signal transduction pathways. This chain is Ethylene-responsive transcription factor ERF119 (ERF119), found in Arabidopsis thaliana (Mouse-ear cress).